Here is a 570-residue protein sequence, read N- to C-terminus: Protein misato homolog 1 (570 aa).

The residue at position 495 (Ser495) is a Phosphoserine.

This sequence belongs to the misato family. Present in all cell lines tested (at protein level). Widely expressed.

The protein localises to the mitochondrion outer membrane. It localises to the cytoplasm. Involved in the regulation of mitochondrial distribution and morphology. Required for mitochondrial fusion and mitochondrial network formation. The chain is Protein misato homolog 1 (MSTO1) from Homo sapiens (Human).